Reading from the N-terminus, the 522-residue chain is 2-isopropylmalate synthase (522 aa).

The Pyruvate carboxyltransferase domain occupies 5-267 (VIIFDTTLRD…ETGINAKEIH (263 aa)). 4 residues coordinate Mn(2+): Asp14, His202, His204, and Asn238. The tract at residues 392–522 (QLQQLVVQSD…MHKNRELGGV (131 aa)) is regulatory domain.

It belongs to the alpha-IPM synthase/homocitrate synthase family. LeuA type 1 subfamily. Homodimer. Mn(2+) is required as a cofactor.

Its subcellular location is the cytoplasm. The enzyme catalyses 3-methyl-2-oxobutanoate + acetyl-CoA + H2O = (2S)-2-isopropylmalate + CoA + H(+). Its pathway is amino-acid biosynthesis; L-leucine biosynthesis; L-leucine from 3-methyl-2-oxobutanoate: step 1/4. Functionally, catalyzes the condensation of the acetyl group of acetyl-CoA with 3-methyl-2-oxobutanoate (2-ketoisovalerate) to form 3-carboxy-3-hydroxy-4-methylpentanoate (2-isopropylmalate). The protein is 2-isopropylmalate synthase of Shewanella sp. (strain MR-4).